Consider the following 1207-residue polypeptide: Dermatan-sulfate epimerase-like protein (1207 aa).

The N-terminal stretch at 1 to 22 is a signal peptide; sequence MAFMFTEHLLFLTLMMCSFSTC. N-linked (GlcNAc...) asparagine glycans are attached at residues N28, N661, N683, and N704. 2 consecutive transmembrane segments (helical) span residues 761-781 and 798-818; these read FPFG…SLVI and CVLI…WSTC. The N-linked (GlcNAc...) asparagine glycan is linked to N869.

The protein belongs to the dermatan-sulfate isomerase family.

It localises to the membrane. This is Dermatan-sulfate epimerase-like protein (Dsel) from Mus musculus (Mouse).